The sequence spans 472 residues: Levansucrase (472 aa).

A signal peptide spans 1–29 (MNIKKIVKQATVLTFTTALLAGGATQAFA). Sucrose is bound by residues W85, D86, and S164. D86 serves as the catalytic Nucleophile. Position 241 (D241) interacts with Ca(2+). Positions 246 and 247 each coordinate sucrose. The Ca(2+) site is built by Q272, L308, N310, and D339. Position 340 (E340) interacts with sucrose. The Proton donor/acceptor role is filled by E342. R360 contacts sucrose.

Belongs to the glycosyl hydrolase 68 family.

It is found in the secreted. It carries out the reaction [6)-beta-D-fructofuranosyl-(2-&gt;](n) alpha-D-glucopyranoside + sucrose = [6)-beta-D-fructofuranosyl-(2-&gt;](n+1) alpha-D-glucopyranoside + D-glucose. With respect to regulation, ca(2+) may play an important structural role and promote stability of levansucrase. In terms of biological role, catalyzes the synthesis of levan, a fructose polymer, by transferring the fructosyl moiety from sucrose to a growing acceptor molecule. Also displays sucrose hydrolase activity. The chain is Levansucrase from Bacillus amyloliquefaciens (Bacillus velezensis).